We begin with the raw amino-acid sequence, 318 residues long: Olfactory receptor 5G26 (318 aa).

Topologically, residues 1–28 (MMHRNQTVVTEFFFTGLTSSFHLQIVLF) are extracellular. Asn-5 carries N-linked (GlcNAc...) asparagine glycosylation. A helical transmembrane segment spans residues 29 to 49 (LTFLCVYLATLLGNLGMIILI). Over 50–56 (HLDTRLH) the chain is Cytoplasmic. The chain crosses the membrane as a helical span at residues 57-77 (IPMYFFLSHLSFVDACSSSVI). The Extracellular portion of the chain corresponds to 78-93 (SPKMLSDMFVDKKVIS). Residues 94-114 (FLGCAIQLCLFSQFVVTECFL) form a helical membrane-spanning segment. The cysteines at positions 97 and 189 are disulfide-linked. Over 115-144 (LASMAYDRYVAICKPLLYTLIMSQRVCVQL) the chain is Cytoplasmic. A helical transmembrane segment spans residues 145-165 (VIGPYSIGFVSTMVHIISAFV). At 166 to 198 (LPYCGPNLINHFFCDLLPVLSLACANTQMKKRL) the chain is on the extracellular side. The helical transmembrane segment at 199–219 (LFIVAGILGVFSGIIILVSYV) threads the bilayer. Residues 220 to 239 (YIAITILKISSADGRRKAFS) lie on the Cytoplasmic side of the membrane. Residues 240–260 (TCSSHLTAVSILYGTLFFIYV) traverse the membrane as a helical segment. Residues 261 to 271 (RPSSSFSLDIN) are Extracellular-facing. Residues 272 to 292 (KVVSLFYTTVIPMLNPFIYSL) traverse the membrane as a helical segment. Over 293–318 (RNKEVKDALIRTFEKQFCYSFQDKIL) the chain is Cytoplasmic.

Belongs to the G-protein coupled receptor 1 family.

The protein resides in the cell membrane. Its function is as follows. Potential odorant receptor. The chain is Olfactory receptor 5G26 from Mus musculus (Mouse).